The chain runs to 101 residues: Small ribosomal subunit protein uS14 (101 aa).

The protein belongs to the universal ribosomal protein uS14 family. In terms of assembly, part of the 30S ribosomal subunit. Contacts proteins S3 and S10.

Functionally, binds 16S rRNA, required for the assembly of 30S particles and may also be responsible for determining the conformation of the 16S rRNA at the A site. In Caulobacter vibrioides (strain ATCC 19089 / CIP 103742 / CB 15) (Caulobacter crescentus), this protein is Small ribosomal subunit protein uS14.